Reading from the N-terminus, the 520-residue chain is Laccase-4 (520 aa).

Positions 1-18 (MGRFSSLCALTAVIHSFG) are cleaved as a signal peptide. Plastocyanin-like domains are found at residues 24-149 (IGPV…MVVY), 161-303 (VDDE…ILRY), and 370-491 (TVPV…FSED). N-linked (GlcNAc...) asparagine glycans are attached at residues asparagine 73 and asparagine 76. 4 residues coordinate Cu cation: histidine 86, histidine 88, histidine 131, and histidine 133. 2 cysteine pairs are disulfide-bonded: cysteine 107/cysteine 509 and cysteine 139/cysteine 227. 2 N-linked (GlcNAc...) asparagine glycosylation sites follow: asparagine 239 and asparagine 399. Residues histidine 418, histidine 421, histidine 423, histidine 473, cysteine 474, histidine 475, and histidine 479 each contribute to the Cu cation site. N-linked (GlcNAc...) asparagine glycosylation occurs at asparagine 497.

This sequence belongs to the multicopper oxidase family. Homodimer. Requires Cu cation as cofactor.

The protein resides in the secreted. The catalysed reaction is 4 hydroquinone + O2 = 4 benzosemiquinone + 2 H2O. Functionally, lignin degradation and detoxification of lignin-derived products. The chain is Laccase-4 (LCC4) from Trametes villosa (White-rot fungus).